Consider the following 255-residue polypeptide: Proteasome subunit alpha (255 aa).

Polar residues predominate over residues 190 to 201 (PSTSGASGNGET). Residues 190–255 (PSTSGASGNG…DKSSGDGEQN (66 aa)) are disordered. A compositionally biased stretch (basic and acidic residues) spans 202–217 (EPSKLEVAILDRERPG).

This sequence belongs to the peptidase T1A family. The 20S proteasome core is composed of 14 alpha and 14 beta subunits that assemble into four stacked heptameric rings, resulting in a barrel-shaped structure. The two inner rings, each composed of seven catalytic beta subunits, are sandwiched by two outer rings, each composed of seven alpha subunits. The catalytic chamber with the active sites is on the inside of the barrel. Has a gated structure, the ends of the cylinder being occluded by the N-termini of the alpha-subunits. Is capped by the proteasome-associated ATPase, ARC.

It is found in the cytoplasm. The protein operates within protein degradation; proteasomal Pup-dependent pathway. Its activity is regulated as follows. The formation of the proteasomal ATPase ARC-20S proteasome complex, likely via the docking of the C-termini of ARC into the intersubunit pockets in the alpha-rings, may trigger opening of the gate for substrate entry. Interconversion between the open-gate and close-gate conformations leads to a dynamic regulation of the 20S proteasome proteolysis activity. Its function is as follows. Component of the proteasome core, a large protease complex with broad specificity involved in protein degradation. The protein is Proteasome subunit alpha of Saccharomonospora viridis (strain ATCC 15386 / DSM 43017 / JCM 3036 / CCUG 5913 / NBRC 12207 / NCIMB 9602 / P101) (Thermoactinomyces viridis).